Here is a 7152-residue protein sequence, read N- to C-terminus: Replicase polyprotein 1ab (7152 aa).

The CoV Nsp1 globular domain maps to tyrosine 54 to tyrosine 174. Positions phenylalanine 192–glycine 222 constitute a BetaCoV Nsp1 C-terminal domain. The 263-residue stretch at valine 226–tyrosine 488 folds into the CoV Nsp2 N-terminal domain. Residues cysteine 365, cysteine 370, cysteine 386, and cysteine 389 each contribute to the Zn(2+) site. Residues cysteine 365–cysteine 389 form a C4 region. The CoV Nsp2 middle domain occupies cysteine 493–leucine 681. Residues leucine 697 to alanine 809 form the CoV Nsp2 C-terminal domain. Residues arginine 811–valine 923 enclose the Ubiquitin-like 1 domain. Tandem repeats lie at residues asparagine 945–aspartate 954, asparagine 955–aspartate 964, asparagine 965–aspartate 974, asparagine 975–aspartate 984, asparagine 985–aspartate 994, asparagine 995–aspartate 1004, asparagine 1005–aspartate 1014, asparagine 1015–aspartate 1024, asparagine 1025–aspartate 1034, asparagine 1035–aspartate 1044, and asparagine 1045–aspartate 1054. The 11 X 10 AA tandem repeat of N-[DN]-D-E-D-V-V-T-G-D stretch occupies residues asparagine 945–aspartate 1054. Residues aspartate 947–aspartate 1036 are disordered. The 251-residue stretch at valine 1093–asparagine 1343 folds into the Peptidase C16 1 domain. Residue cysteine 1131 is the For PL1-PRO activity of the active site. Zn(2+) is bound by residues cysteine 1208, cysteine 1211, cysteine 1234, and cysteine 1236. Residues cysteine 1208–cysteine 1236 form a C4-type 1 zinc finger. Catalysis depends on for PL1-PRO activity residues histidine 1282 and aspartate 1293. A Macro domain is found at glutamate 1321 to valine 1492. Residues asparagine 1548–alanine 1619 form the DPUP domain. The region spanning alanine 1619–glutamine 1674 is the Ubiquitin-like 2 domain. Residues serine 1688 to glutamine 1948 enclose the Peptidase C16 2 domain. The active-site For PL2-PRO activity is the cysteine 1727. Cysteine 1805, cysteine 1807, cysteine 1839, and cysteine 1841 together coordinate Zn(2+). Residues cysteine 1805–cysteine 1841 form a C4-type 2 zinc finger. Active-site for PL2-PRO activity residues include histidine 1884 and aspartate 1898. The region spanning isoleucine 1962–serine 2063 is the Nucleic acid-binding domain. Residues glutamate 2078–glutamate 2227 enclose the G2M domain. Helical transmembrane passes span alanine 2196–phenylalanine 2216, phenylalanine 2257–phenylalanine 2277, and phenylalanine 2288–isoleucine 2308. The tract at residues alanine 2196 to valine 2433 is HD1. In terms of domain architecture, 3Ecto spans glycine 2293–aspartate 2354. Intrachain disulfides connect cysteine 2309–cysteine 2333 and cysteine 2324–cysteine 2330. The next 2 helical transmembrane spans lie at leucine 2371–leucine 2391 and phenylalanine 2413–valine 2433. The interval glycine 2441 to aspartate 2531 is Y1. The 368-residue stretch at glycine 2441–glycine 2808 folds into the CoV Nsp3 Y domain. Positions 2445, 2450, 2455, 2458, 2491, 2494, 2498, and 2501 each coordinate Zn(2+). Residues histidine 2445–cysteine 2458 form a ZF1 region. The segment at cysteine 2491 to cysteine 2501 is ZF2. Positions alanine 2532 to alanine 2624 are Y2. A coV-Y region spans residues alanine 2532–glycine 2808. The tract at residues cysteine 2625–glycine 2707 is Y3. Residues leucine 2708–glycine 2808 are Y4. Helical transmembrane passes span leucine 2814–proline 2834, alanine 3089–isoleucine 3109, valine 3121–valine 3141, valine 3148–methionine 3168, and isoleucine 3173–isoleucine 3193. The tract at residues leucine 2814–isoleucine 3193 is HD2. The Nsp4C domain maps to isoleucine 3207–glutamine 3304. Residues serine 3305 to glutamine 3607 enclose the Peptidase C30 domain. Catalysis depends on for 3CL-PRO activity residues histidine 3345 and cysteine 3449. Transmembrane regions (helical) follow at residues isoleucine 3621–phenylalanine 3641, threonine 3646–valine 3666, phenylalanine 3671–valine 3691, phenylalanine 3714–threonine 3734, isoleucine 3742–glycine 3762, leucine 3770–isoleucine 3790, and leucine 3813–serine 3833. Residues isoleucine 3621–serine 3833 are HD3. Residues serine 3895–glutamine 3983 enclose the RdRp Nsp7 cofactor domain. Residues alanine 3984–glutamine 4180 form the RdRp Nsp8 cofactor domain. The 110-residue stretch at asparagine 4181–glutamine 4290 folds into the Nsp9 ssRNA-binding domain. Residues alanine 4291 to serine 4428 form the ExoN/MTase coactivator domain. Residues cysteine 4364, cysteine 4367, histidine 4373, cysteine 4380, cysteine 4406, cysteine 4409, cysteine 4417, and cysteine 4419 each contribute to the Zn(2+) site. Zinc fingers lie at residues cysteine 4364 to cysteine 4380 and cysteine 4406 to cysteine 4419. The region spanning phenylalanine 4433 to tyrosine 4688 is the NiRAN domain. Asparagine 4636 and aspartate 4645 together coordinate Mn(2+). Residues arginine 4689–tyrosine 4787 form the Nsp12 Interface domain. Residues histidine 4718, cysteine 4724, cysteine 4729, cysteine 4733, and cysteine 4910 each contribute to the Zn(2+) site. Residues arginine 4788 to glutamine 5355 form the Nsp12 RNA-dependent RNA polymerase domain. The segment at serine 4790–alanine 5004 is rdRp Fingers N-ter. The tract at residues threonine 5005–proline 5043 is rdRp Palm N-ter. One can recognise a RdRp catalytic domain in the interval proline 5035–glycine 5197. Residues lysine 5044–glycine 5102 form a rdRp Fingers C-ter region. Residues histidine 5065, cysteine 5068, and cysteine 5069 each contribute to the Zn(2+) site. The interval threonine 5103–glutamine 5238 is rdRp Palm C-ter. Residues serine 5182, aspartate 5183, and aspartate 5184 contribute to the active site. Residues histidine 5239–glutamine 5355 are rdRp Thumb. Residues serine 5356–lysine 5468 form the CV ZBD domain. Zn(2+) contacts are provided by cysteine 5360, cysteine 5363, cysteine 5371, cysteine 5374, cysteine 5381, cysteine 5384, histidine 5388, histidine 5394, cysteine 5405, cysteine 5410, cysteine 5427, and histidine 5430. The (+)RNA virus helicase ATP-binding domain occupies serine 5611–leucine 5792. Residue glycine 5636–serine 5643 participates in ATP binding. The region spanning glycine 5793–asparagine 5962 is the (+)RNA virus helicase C-terminal domain. One can recognise an ExoN domain in the interval phenylalanine 6029–cysteine 6244. Catalysis depends on residues aspartate 6047, glutamate 6049, and glutamate 6148. The Zn(2+) site is built by cysteine 6164, cysteine 6167, cysteine 6183, histidine 6186, histidine 6214, cysteine 6218, and histidine 6221. Catalysis depends on residues histidine 6225 and aspartate 6230. Residue cysteine 6236 participates in Zn(2+) binding. The 227-residue stretch at tyrosine 6253–glutamine 6479 folds into the N7-MTase domain. Aspartate 6288–glycine 6294 is an S-adenosyl-L-methionine binding site. Residues cysteine 6366–threonine 6380 form a gpppA-binding region. Positions 6404, 6425, 6436, and 6439 each coordinate Zn(2+). Residues serine 6480 to arginine 6540 enclose the Nsp15 N-terminal oligomerization domain. Residues serine 6541–valine 6661 form the AV-Nsp11N/CoV-Nsp15M domain. The NendoU domain occupies glutamate 6711–proline 6850. Active-site residues include histidine 6741, histidine 6756, lysine 6796, lysine 6899, aspartate 6983, lysine 7023, and glutamate 7056. Residues threonine 6855–valine 7149 enclose the Nidovirus-type SAM-dependent 2'-O-MTase domain.

Belongs to the coronaviruses polyprotein 1ab family. As to quaternary structure, interacts with host PHB and PHB2. In terms of assembly, interacts with papain-like protease nsp3 and non-structural protein 6. Monomer. Homodimer. Only the homodimer shows catalytic activity. As to quaternary structure, interacts with nsp8 and nsp12 to form the replication-transcription complex (RTC): nsp12, nsp7, two subunits of nsp8, and up to two subunits of nsp13. In terms of assembly, interacts with nsp7, nsp13 and nsp12 to form the replication-transcription complex (RTC): nsp12, nsp7, two subunits of nsp8, and up to two subunits of nsp13. Interacts with nsp12. As to quaternary structure, interacts with proofreading exoribonuclease nsp14 and 2'-O-methyltransferase nsp16; these interactions enhance nsp14 and nsp16 enzymatic activities. In terms of assembly, interacts with nsp7 and nsp8 to form the replication-transcription complex (RTC): nsp12, nsp7, two subunits of nsp8, and up to two subunits of nsp13. Interacts with nsp9. Interacts with nsp8 to form the replication-transcription complex (RTC): nsp12, nsp7, two subunits of nsp8, and up to two subunits of nsp13. Mn(2+) is required as a cofactor. The cofactor is Mg(2+). Specific enzymatic cleavages in vivo by its own proteases yield mature proteins. 3CL-PRO and PL-PRO proteinases are autocatalytically processed.

Its subcellular location is the host membrane. The protein localises to the host cytoplasm. It is found in the host perinuclear region. The protein resides in the host endoplasmic reticulum-Golgi intermediate compartment. It catalyses the reaction RNA(n) + a ribonucleoside 5'-triphosphate = RNA(n+1) + diphosphate. It carries out the reaction ATP + H2O = ADP + phosphate + H(+). The catalysed reaction is Thiol-dependent hydrolysis of ester, thioester, amide, peptide and isopeptide bonds formed by the C-terminal Gly of ubiquitin (a 76-residue protein attached to proteins as an intracellular targeting signal).. The enzyme catalyses a 5'-end (N(7)-methyl 5'-triphosphoguanosine)-ribonucleoside in mRNA + S-adenosyl-L-methionine = a 5'-end (N(7)-methyl 5'-triphosphoguanosine)-(2'-O-methyl-ribonucleoside) in mRNA + S-adenosyl-L-homocysteine + H(+). It catalyses the reaction uridylyl-uridylyl-ribonucleotide-RNA = a 3'-end uridylyl-2',3'-cyclophospho-uridine-RNA + a 5'-end dephospho-ribonucleoside-RNA. It carries out the reaction a 5'-end diphospho-ribonucleoside in mRNA + GTP + H(+) = a 5'-end (5'-triphosphoguanosine)-ribonucleoside in mRNA + diphosphate. The catalysed reaction is a 5'-end (5'-triphosphoguanosine)-ribonucleoside in mRNA + S-adenosyl-L-methionine = a 5'-end (N(7)-methyl 5'-triphosphoguanosine)-ribonucleoside in mRNA + S-adenosyl-L-homocysteine. In terms of biological role, the replicase polyprotein of coronaviruses is a multifunctional protein: it contains the activities necessary for the transcription of negative stranded RNA, leader RNA, subgenomic mRNAs and progeny virion RNA as well as proteinases responsible for the cleavage of the polyprotein into functional products. Inhibits host translation by interacting with the 40S ribosomal subunit. The nsp1-40S ribosome complex further induces an endonucleolytic cleavage near the 5'UTR of host mRNAs, targeting them for degradation. Viral mRNAs are not susceptible to nsp1-mediated endonucleolytic RNA cleavage thanks to the presence of a 5'-end leader sequence and are therefore protected from degradation. By suppressing host gene expression, nsp1 facilitates efficient viral gene expression in infected cells and evasion from host immune response. Functionally, may play a role in the modulation of host cell survival signaling pathway by interacting with host PHB and PHB2. Indeed, these two proteins play a role in maintaining the functional integrity of the mitochondria and protecting cells from various stresses. Its function is as follows. Responsible for the cleavages located at the N-terminus of the replicase polyprotein. In addition, PL-PRO possesses a deubiquitinating/deISGylating activity and processes both 'Lys-48'- and 'Lys-63'-linked polyubiquitin chains from cellular substrates. Participates together with nsp4 in the assembly of virally-induced cytoplasmic double-membrane vesicles necessary for viral replication. Antagonizes innate immune induction of type I interferon by blocking the phosphorylation, dimerization and subsequent nuclear translocation of host IRF3. Also prevents host NF-kappa-B signaling. In terms of biological role, participates in the assembly of virally-induced cytoplasmic double-membrane vesicles necessary for viral replication. Cleaves the C-terminus of replicase polyprotein at 11 sites. Recognizes substrates containing the core sequence [ILMVF]-Q-|-[SGACN]. Also able to bind an ADP-ribose-1''-phosphate (ADRP). Functionally, plays a role in the initial induction of autophagosomes from host endoplasmic reticulum. Later, limits the expansion of these phagosomes that are no longer able to deliver viral components to lysosomes. Its function is as follows. Forms a hexadecamer with nsp8 (8 subunits of each) that may participate in viral replication by acting as a primase. Alternatively, may synthesize substantially longer products than oligonucleotide primers. In terms of biological role, forms a hexadecamer with nsp7 (8 subunits of each) that may participate in viral replication by acting as a primase. Alternatively, may synthesize substantially longer products than oligonucleotide primers. Forms a primer, NSP9-pU, which is utilized by the polymerase for the initiation of RNA chains. Interacts with ribosome signal recognition particle RNA (SRP). Together with NSP8, suppress protein integration into the cell membrane, thereby disrupting host immune defenses. Functionally, plays a pivotal role in viral transcription by stimulating both nsp14 3'-5' exoribonuclease and nsp16 2'-O-methyltransferase activities. Therefore plays an essential role in viral mRNAs cap methylation. Its function is as follows. RNA-directed RNA polymerase that catalyzes the transcription of viral genomic and subgenomic RNAs. Acts in complex with nsp7 and nsp8 to transcribe both the minus and positive strands of genomic RNA. The kinase-like NiRAN domain of NSP12 attaches one or more nucleotides to the amino terminus of NSP9, forming a covalent RNA-protein intermediate that serves as transcription/replication primer. Subgenomic RNAs (sgRNAs) are formed by discontinuous transcription: The polymerase has the ability to pause at transcription-regulating sequences (TRS) and jump to the leader TRS, resulting in a major deletion. This creates a series of subgenomic RNAs that are replicated, transcribed and translated. In addition, Nsp12 is a subunit of the viral RNA capping enzyme that catalyzes the RNA guanylyltransferase reaction for genomic and sub-genomic RNAs. Subsequently, the NiRAN domain transfers RNA to GDP, and forms the core cap structure GpppA-RNA. In terms of biological role, multi-functional protein with a zinc-binding domain in N-terminus displaying RNA and DNA duplex-unwinding activities with 5' to 3' polarity. Activity of helicase is dependent on magnesium. Plays a role in viral RNA synthesis through two distinct activities. The N7-guanine methyltransferase activity plays a role in the formation of the cap structure GpppA-RNA. The proofreading exoribonuclease reduces the sensitivity of the virus to RNA mutagens during replication. This activity acts on both ssRNA and dsRNA in a 3'-5' direction. Functionally, plays a role in viral transcription/replication and prevents the simultaneous activation of host cell dsRNA sensors, such as MDA5/IFIH1, OAS, and PKR. Acts by degrading the 5'-polyuridines generated during replication of the poly(A) region of viral genomic and subgenomic RNAs. Catalyzes a two-step reaction in which a 2'3'-cyclic phosphate (2'3'-cP) is first generated by 2'-O transesterification, which is then hydrolyzed to a 3'-phosphate (3'-P). If not degraded, poly(U) RNA would hybridize with poly(A) RNA tails and activate host dsRNA sensors. Its function is as follows. Methyltransferase that mediates mRNA cap 2'-O-ribose methylation to the 5'-cap structure of viral mRNAs. N7-methyl guanosine cap is a prerequisite for binding of nsp16. Therefore plays an essential role in viral mRNAs cap methylation which is essential to evade immune system. The protein is Replicase polyprotein 1ab (rep) of Homo sapiens (Human).